The chain runs to 1311 residues: MSSEPTSSIESDNLRRSKRKKFKLDFVAAAHGNNQKKSRKDPHGQGDDDDDTFDDDLNHFEPLSVLTEQDVSMEMFEDDEEDTVSRRRTRRSTAHFQDYQEPDRWIENSGPHACHKCPSRYESKSSLANHTKMHLGEKRKFACELCDFSASTLKSLTHHNNIHQNFGVLSQQTSPVIPVASSADSTLNSSINSTGCQINAPPAPKLDEEAPIAVESVVVHHEDVAEFDTTPPPILEREDDGPPVLIREAPVRKSNRPMKPTQKAQKMTKQRERKSKTVESPKGSLPSSSASSVTPPPVRKDVEKPKIFVKTTKKNLKKTMKITKVRQRCPHCPFTTSTVTRLNRHSGGHKLKEGYICPSENCNFMCRKAGFLQKHYILHKGTLPWPPEYVKKGGAKMKRTFPESEEKKIEVTEKVQKMKKMHKRRANTVQVVAKAQLKSYIKVEVDDVIFKKCNIGECEFLTQTLTQLIVHKVKTHDTKTAFPQHRFLCLTCGHRAKSYAALRTHKLIEHTSTHKRFHRTYYLKECVGDKFFVKYNLSKVQEEVKEEPKEADGDESGDESFDSMCPASDVHPETLAAIEMKDVFFCCNMCPYKAPTMNRCQRHYDKHFKNDEFKCQYCSWSSRSKEVIVNHEKLHPTVVVANTNEAPVVKNEIEAKVEVLSKTVSSPVECTEESSLSKSIQLWCQREKLRHPELDEQFTRKMIDGVKGFQCTDCPYTSKYRGDMRSHKKRHDIEQLYRCVQCTYTTNRPVSLKDHLKQHAIVNMSIADIKSRRVVVNQGVKIGMRRGVGKDKIYCCDKCPYVTLALGCLWRHHRNHRDTAKINICSNCSYSSIDQRKMEEHTIIHLGLGLNEAVPFVKRVDQKGRPVSSLTDLNSEKMNERKSTKRKMLDKVEKMEVGEDEEDDEESVDKGTDDGDYKQRPEKKRKQSSEEPASDPELFGSSSQPTRQLSERATRNRINYSLLSKNGSGKPTPSTSSANLEKLAGSSGGASSESPEPDESVEVSHWKIRTFLRSEYGVKESLKCPDCPYKSSEPDVLEKHRYYHMTKTTPRPYACSDCTFNTYTPTALLQHLKLHSEGVYFDPMVKKHMKHRKGDSIPPGVKGYYCKNCSFKTSIHRNFIEHSAYHRQQLINRINITLKRQPPRIEYQRPKLKHQFVAKNAKYCKKCTFKCVSQSNFIEHLDRHGWNQLYKCYSCDYSDNTKSVVDFHQLNHHIVKDQTLHSICQSAKFRLENGVIQIPEFQTEKSKPTPDEFVSKTRGLLKCPSCEYFCHVSSELAFHMSVHHLTEPNARETISYLHMGLVPPKATVTTV.

Polar residues predominate over residues 1–11 (MSSEPTSSIES). 2 disordered regions span residues 1 to 58 (MSSE…DDLN) and 75 to 95 (MFED…STAH). 2 C2H2-type zinc fingers span residues 112 to 134 (HACH…TKMH) and 141 to 163 (FACE…NNIH). The disordered stretch occupies residues 226-304 (EFDTTPPPIL…PPPVRKDVEK (79 aa)). Low complexity predominate over residues 280-293 (SPKGSLPSSSASSV). 4 consecutive C2H2-type zinc fingers follow at residues 327–349 (QRCP…SGGH), 355–379 (YICP…YILH), 451–476 (KKCN…VKTH), and 487–510 (FLCL…LIEH). The tract at residues 544–563 (VKEEPKEADGDESGDESFDS) is disordered. Over residues 552 to 561 (DGDESGDESF) the composition is skewed to acidic residues. 6 C2H2-type zinc fingers span residues 585 to 607 (FCCN…YDKH), 613 to 635 (FKCQ…EKLH), 709 to 731 (FQCT…KKRH), 737 to 759 (YRCV…LKQH), 794 to 816 (YCCD…HRNH), and 823 to 845 (NICS…TIIH). Positions 865–1002 (RPVSSLTDLN…ESPEPDESVE (138 aa)) are disordered. A compositionally biased stretch (basic and acidic residues) spans 874–897 (NSEKMNERKSTKRKMLDKVEKMEV). Acidic residues predominate over residues 898–907 (GEDEEDDEES). The segment covering 908–920 (VDKGTDDGDYKQR) has biased composition (basic and acidic residues). Polar residues predominate over residues 956–979 (NRINYSLLSKNGSGKPTPSTSSAN). 6 consecutive C2H2-type zinc fingers follow at residues 1022–1044 (LKCP…RYYH), 1053–1075 (YACS…LKLH), 1104–1126 (YYCK…SAYH), 1162–1184 (KYCK…LDRH), 1190–1212 (YKCY…QLNH), and 1261–1284 (LKCP…SVHH).

As to expression, expressed in neurons.

The protein localises to the nucleus. Functionally, probable transcriptional regulator, which participates in the transcriptional repression of the presenilin protein hop-1. Might play a role in the oxidative stress response. This is Suppressor of presenilin protein 4 (spr-4) from Caenorhabditis elegans.